Here is a 99-residue protein sequence, read N- to C-terminus: Large ribosomal subunit protein bL27 (99 aa).

Residues 1 to 9 (MLIMNLQLF) constitute a propeptide that is removed on maturation.

It belongs to the bacterial ribosomal protein bL27 family. The N-terminus is cleaved by ribosomal processing cysteine protease Prp.

The protein is Large ribosomal subunit protein bL27 of Clostridium botulinum (strain Eklund 17B / Type B).